The following is a 393-amino-acid chain: Probable acetyl-CoA acyltransferase (393 aa).

The Acyl-thioester intermediate role is filled by Cys88. Active-site proton acceptor residues include His349 and Cys378.

It belongs to the thiolase-like superfamily. Thiolase family.

The protein resides in the cytoplasm. The catalysed reaction is 2 acetyl-CoA = acetoacetyl-CoA + CoA. The sequence is that of Probable acetyl-CoA acyltransferase from Staphylococcus aureus (strain COL).